We begin with the raw amino-acid sequence, 151 residues long: Sperm surface protein Sp17 (151 aa).

2 disordered regions span residues 56-115 (DPAE…EKEE) and 127-151 (GHIA…EENK). Basic and acidic residues predominate over residues 62 to 98 (SKVEDRFYNNHAFEEQEPPEKSDPKQEESQISGKEEE). The 30-residue stretch at 114–143 (EEVAAVKIQAAFRGHIAREEAKKMKTNSLQ) folds into the IQ domain.

As to quaternary structure, homodimer. May interact with ROPN1. As to expression, testis and sperm specific.

The protein resides in the membrane. Its function is as follows. Sperm surface zona pellucida binding protein. Helps to bind spermatozoa to the zona pellucida with high affinity. Might function in binding zona pellucida and carbohydrates. This chain is Sperm surface protein Sp17 (SPA17), found in Homo sapiens (Human).